Here is a 368-residue protein sequence, read N- to C-terminus: tRNA-specific 2-thiouridylase MnmA (368 aa).

ATP-binding positions include 23–30 and Leu49; that span reads ALSGGVDS. Cys110 serves as the catalytic Nucleophile. Cys110 and Cys209 are oxidised to a cystine. Gly135 contacts ATP. An interaction with tRNA region spans residues 159-161; sequence KDQ. Cys209 (cysteine persulfide intermediate) is an active-site residue. An interaction with tRNA region spans residues 314–315; that stretch reads RY.

The protein belongs to the MnmA/TRMU family.

It is found in the cytoplasm. It carries out the reaction S-sulfanyl-L-cysteinyl-[protein] + uridine(34) in tRNA + AH2 + ATP = 2-thiouridine(34) in tRNA + L-cysteinyl-[protein] + A + AMP + diphosphate + H(+). Its function is as follows. Catalyzes the 2-thiolation of uridine at the wobble position (U34) of tRNA, leading to the formation of s(2)U34. The sequence is that of tRNA-specific 2-thiouridylase MnmA from Synechococcus sp. (strain JA-2-3B'a(2-13)) (Cyanobacteria bacterium Yellowstone B-Prime).